A 795-amino-acid polypeptide reads, in one-letter code: Protocadherin beta-4 (795 aa).

Positions 1-27 (MKKLGRIHPNRQVLAFILMVFLSQVRL) are cleaved as a signal peptide. The Extracellular portion of the chain corresponds to 28–689 (EPIRYSVLEE…AQADSLTVYL (662 aa)). 5 Cadherin domains span residues 34 to 132 (VLEE…SPIF), 137 to 241 (VLLK…APEF), 246 to 346 (YGVQ…PPEL), 351 to 450 (LTSS…APAF), and 455 to 560 (YTLF…SPFV). Asparagine 183 is a glycosylation site (N-linked (GlcNAc...) asparagine). Asparagine 417 and asparagine 435 each carry an N-linked (GlcNAc...) asparagine glycan. N-linked (GlcNAc...) asparagine glycosylation is present at asparagine 566. Residues 567 to 670 (GSAPCTELVP…LVDGFSQPYL (104 aa)) form the Cadherin 6 domain. A helical membrane pass occupies residues 690–710 (VVALASVSSLFLFSVLLFVAV). The Cytoplasmic portion of the chain corresponds to 711–795 (RLCRRSRAAS…PKFRNSLVFS (85 aa)).

The protein resides in the cell membrane. Potential calcium-dependent cell-adhesion protein. May be involved in the establishment and maintenance of specific neuronal connections in the brain. The polypeptide is Protocadherin beta-4 (PCDHB4) (Homo sapiens (Human)).